Here is a 533-residue protein sequence, read N- to C-terminus: Lymphocyte cytosolic protein 2 (533 aa).

An SAM domain is found at 12–78; that stretch reads VLAWNSDNLA…SQDINKNEER (67 aa). Tyr23 is subject to Phosphotyrosine. 2 disordered regions span residues 78 to 359 and 374 to 419; these read RRSI…PLAH and SASL…TPLD. The span at 94 to 144 shows a compositional bias: acidic residues; that stretch reads ETESHEEDDGGWSSFEDDYESPNDDDPDGEDDGDYESPNEEEQALVDDAAD. Residues 151–172 show a composition bias toward polar residues; sequence NNEEALQSSILPPNSFHNTNSM. The segment covering 186-201 has biased composition (pro residues); sequence PPVPPLRPKPALPPLP. Phosphoserine is present on residues Ser207 and Ser210. The span at 340–354 shows a compositional bias: polar residues; that stretch reads NTFPSRSVQPSSKNT. Residues Ser376 and Ser410 each carry the phosphoserine modification. Pro residues predominate over residues 400-411; that stretch reads LPVPNRPQPPSP. Residues 422 to 530 form the SH2 domain; that stretch reads WYVSYITRPE…RYQCTLTHAA (109 aa).

As to quaternary structure, interacts with SLA. Interacts with CBLB. Interacts with GRB2. Interacts with SHB. Interacts with PRAM1. Interacts (via SH2 domain) with CD6 (via tyrosine phosphorylated C-terminus). Interacts with FYB1 and the phosphorylated form of FYB2. Interacts with 14-3-3 adapter/YWHAZ; this phosphorylation leads to YWHAZ proteolytic degradation. Interacts with VAV1; this interaction plays a role in TCR-mediated cytokine production. Interacts with AGER; this interaction plays an important role in AGER-mediated pro-inflammatory responses and cytokine release. Phosphorylated after T-cell receptor activation by ZAP70, ITK and TXK, which leads to the up-regulation of Th1 preferred cytokine IL-2. SYK-dependent phosphorylation is required for recruitment of PI3K signaling components. In terms of tissue distribution, highly expressed in spleen, thymus, and peripheral blood leukocytes.

The protein resides in the cytoplasm. Its function is as follows. Adapter protein primarily involved in signaling pathways within T-cells, as well as other immune cells such as platelets, mast cells, and natural killer (NK) cells. Plays a crucial role for transducing signal from the T-cell receptor (TCR) after antigen recognition leading to T-cell activation. Mechanistically, once phosphorylated by the kinase ZAP70, mediates interactions with the guanine-nucleotide exchange factor VAV1, the adapter protein NCK and the kinase ITK. In turn, stimulates the activation of PKC-theta/PRKCQ and NF-kappa-B transcriptional activity in response to CD3 and CD28 costimulation. Also plays an essential role in AGER-induced signaling pathways including p38 MAPK and ERK1/2 activation leading to cytokine release and pro-inflammatory responses. This Mus musculus (Mouse) protein is Lymphocyte cytosolic protein 2 (Lcp2).